Reading from the N-terminus, the 880-residue chain is MTKQDQEMPTKYHPQDIESKWYEYWIEGKFFEATSDETKKPYTIVIPPPNVTGKLHLGHAWDTALQDILSRLKRMQGYDTLWLPGMDHAGIATQAKVEAKLREEGKSRYDLGREAFVEKTWEWKEEYADFIRQQWAKLGLSLDYSRERFTLDEGLSKAVREVFVKLYEKGLIYRGEYIINWDPVTKTALSDIEVIYKDVQGYFYHMKYPLADGDGAIEVATTRPETMLGDTAVAVHPEDERYQHLIGKMVKLPITGREIPIVADDYVDMEFGSGAVKITPAHDPNDFEIGNRHNLPRILVMNEDGTMNEKAGQYEGMDRFECRKQIVKDLQEQGVLFKIEEHVHSVGHSERSGAVVEPYLSTQWFVKMKPLAEQAIELQTTENKVNFVPDRFEKTYLRWMENIRDWCISRQLWWGHRIPAWYHKETGEVYVGHEAPQDIDNWKQDEDVLDTWFSSALWPFSTMGWPDEEAPDYKRYYSTDALVTGYDIIFFWVSRMIFQGLEFTGQPPFKDVLIHGLVRDAEGQKMSKSLGNGVDPMEVIDKYGADALRFFLATGSSPGNDLRFYWEKVESTWNFGNKIWNASRFALMNMDGMSYDEIDLTGEKSIADQWILTRLQETIETVTRLIDAYEFGEVGRHLYNFIWDDLCDWYIEMAKLPLYGEDEVAKKTTRSVLAYVLDQTMRLLHPLMPFITEEIWQHLPHEGESITVASWPVKSEEFTFEQAMGDMELLKDIIRSVRNTRAELNVPMSKEIELHIQAKNEDVLTQLERGKHYIEKFCNPSTLVMGTAIEKPEKSMSNVLSGVELYLPLAGLLDLEEEIARLEKEENKLEKEVERVQKKLSNQGFLAKAPEKVIEEERKKEADYLEKRAAVRARIKELKG.

Residues 49-59 (PNVTGKLHLGH) carry the 'HIGH' region motif. Residues 525–529 (KMSKS) carry the 'KMSKS' region motif. Position 528 (Lys528) interacts with ATP. Residues 809-879 (LAGLLDLEEE…AVRARIKELK (71 aa)) are a coiled coil.

This sequence belongs to the class-I aminoacyl-tRNA synthetase family. ValS type 1 subfamily. As to quaternary structure, monomer.

The protein resides in the cytoplasm. The enzyme catalyses tRNA(Val) + L-valine + ATP = L-valyl-tRNA(Val) + AMP + diphosphate. In terms of biological role, catalyzes the attachment of valine to tRNA(Val). As ValRS can inadvertently accommodate and process structurally similar amino acids such as threonine, to avoid such errors, it has a 'posttransfer' editing activity that hydrolyzes mischarged Thr-tRNA(Val) in a tRNA-dependent manner. This is Valine--tRNA ligase from Halalkalibacterium halodurans (strain ATCC BAA-125 / DSM 18197 / FERM 7344 / JCM 9153 / C-125) (Bacillus halodurans).